Here is a 320-residue protein sequence, read N- to C-terminus: Aspartate carbamoyltransferase catalytic subunit (320 aa).

Arg68 and Thr69 together coordinate carbamoyl phosphate. Lys96 is an L-aspartate binding site. Carbamoyl phosphate-binding residues include Arg118, His148, and Gln151. Positions 181 and 236 each coordinate L-aspartate. 2 residues coordinate carbamoyl phosphate: Gly277 and Pro278.

It belongs to the aspartate/ornithine carbamoyltransferase superfamily. ATCase family. In terms of assembly, heterododecamer (2C3:3R2) of six catalytic PyrB chains organized as two trimers (C3), and six regulatory PyrI chains organized as three dimers (R2).

The enzyme catalyses carbamoyl phosphate + L-aspartate = N-carbamoyl-L-aspartate + phosphate + H(+). It participates in pyrimidine metabolism; UMP biosynthesis via de novo pathway; (S)-dihydroorotate from bicarbonate: step 2/3. In terms of biological role, catalyzes the condensation of carbamoyl phosphate and aspartate to form carbamoyl aspartate and inorganic phosphate, the committed step in the de novo pyrimidine nucleotide biosynthesis pathway. The polypeptide is Aspartate carbamoyltransferase catalytic subunit (Leptothrix cholodnii (strain ATCC 51168 / LMG 8142 / SP-6) (Leptothrix discophora (strain SP-6))).